A 100-amino-acid polypeptide reads, in one-letter code: Replication restart protein PriB (100 aa).

The region spanning Met-1 to Lys-99 is the SSB domain.

This sequence belongs to the PriB family. In terms of assembly, homodimer. Interacts with PriA and DnaT. Component of the replication restart primosome. Primosome assembly occurs via a 'hand-off' mechanism. PriA binds to replication forks, subsequently PriB then DnaT bind; DnaT then displaces ssDNA to generate the helicase loading substrate.

Functionally, involved in the restart of stalled replication forks, which reloads the replicative helicase on sites other than the origin of replication; the PriA-PriB pathway is the major replication restart pathway. During primosome assembly it facilitates complex formation between PriA and DnaT on DNA; stabilizes PriA on DNA. Stimulates the DNA unwinding activity of PriA helicase. The protein is Replication restart protein PriB of Neisseria meningitidis serogroup A / serotype 4A (strain DSM 15465 / Z2491).